Consider the following 170-residue polypeptide: Tachykinin-4 (170 aa).

Positions 1–16 (MLPLLALFLLIGPAVS) are cleaved as a signal peptide. A propeptide spanning residues 17–54 (TTTRDREDLTFGAEAESWVTVNLKGIPVPSIELKLQEL) is cleaved from the precursor. M66 carries the post-translational modification Methionine amide. Positions 67-170 (GKRVEGVHPI…SQMMPRPSRP (104 aa)) are excised as a propeptide. A disordered region spans residues 107 to 170 (QETNHQSAGP…SQMMPRPSRP (64 aa)). The span at 123–140 (SLQSQRGRSEPPNHQQHV) shows a compositional bias: polar residues.

This sequence belongs to the tachykinin family.

Its subcellular location is the secreted. In terms of biological role, tachykinins are active peptides which excite neurons, evoke behavioral responses, are potent vasodilators and secretagogues, and contract (directly or indirectly) many smooth muscles. Hemokinin induces plasma extravasation, mast cell degranulation, muscle contraction, salivary secretion and scratching behavior. Increases sperm motility. Induces potent analgesic effects and may play a role in pain modulation. Promotes survival of bone marrow B lineage cells and of cultured LPS-stimulated pre-B cells and may act as an autocrine factor required for B-cell survival and proliferation. Lowers systemic arterial pressure following intravenous injection. Induces interferon-gamma production and may play a role in the inflammatory response. Shows potent affinity and specificity for the NK-1 receptor. The polypeptide is Tachykinin-4 (Rattus norvegicus (Rat)).